We begin with the raw amino-acid sequence, 58 residues long: Teratocyte protein CftICK-III (58 aa).

The signal sequence occupies residues 1 to 24 (MQKFMRLFFLGLFFILFMTTQIKA). Disulfide bonds link Cys-27/Cys-42, Cys-34/Cys-47, and Cys-41/Cys-55.

In terms of tissue distribution, abundantly expressed by teratocytes, which are extra-embryonic cells released by parasitoid wasps into their hosts during larval eclosion.

Its subcellular location is the secreted. In terms of biological role, this endoparasitoid wasp peptide has immununosuppressive and insecticidal activities. Suppress cellular immunity which is detectable as a reduction of hemocyte encapsulation in the host. In vivo, ingestion of this peptide (probably at excessive doses) increases larval mortality and reduces leaf consumption in both lepidopteran species D.saccharalis and S.frugiperda, which are permissive and non-permissive hosts for C.flavipes, respectively. In Cotesia flavipes (Parasitic wasp), this protein is Teratocyte protein CftICK-III.